Consider the following 499-residue polypeptide: Aspartyl/glutamyl-tRNA(Asn/Gln) amidotransferase subunit B (499 aa).

It belongs to the GatB/GatE family. GatB subfamily. In terms of assembly, heterotrimer of A, B and C subunits.

It catalyses the reaction L-glutamyl-tRNA(Gln) + L-glutamine + ATP + H2O = L-glutaminyl-tRNA(Gln) + L-glutamate + ADP + phosphate + H(+). It carries out the reaction L-aspartyl-tRNA(Asn) + L-glutamine + ATP + H2O = L-asparaginyl-tRNA(Asn) + L-glutamate + ADP + phosphate + 2 H(+). Functionally, allows the formation of correctly charged Asn-tRNA(Asn) or Gln-tRNA(Gln) through the transamidation of misacylated Asp-tRNA(Asn) or Glu-tRNA(Gln) in organisms which lack either or both of asparaginyl-tRNA or glutaminyl-tRNA synthetases. The reaction takes place in the presence of glutamine and ATP through an activated phospho-Asp-tRNA(Asn) or phospho-Glu-tRNA(Gln). The polypeptide is Aspartyl/glutamyl-tRNA(Asn/Gln) amidotransferase subunit B (Mesorhizobium japonicum (strain LMG 29417 / CECT 9101 / MAFF 303099) (Mesorhizobium loti (strain MAFF 303099))).